The primary structure comprises 224 residues: Probable proteasome subunit beta type-4 (224 aa).

The protein belongs to the peptidase T1B family. The 26S proteasome consists of a 20S proteasome core and two 19S regulatory subunits. The 20S proteasome core is composed of 28 subunits that are arranged in four stacked rings, resulting in a barrel-shaped structure. The two end rings are each formed by seven alpha subunits, and the two central rings are each formed by seven beta subunits. The catalytic chamber with the active sites is on the inside of the barrel.

It is found in the cytoplasm. The protein resides in the nucleus. Non-catalytic component of the proteasome, a multicatalytic proteinase complex which is characterized by its ability to cleave peptides with Arg, Phe, Tyr, Leu, and Glu adjacent to the leaving group at neutral or slightly basic pH. The proteasome has an ATP-dependent proteolytic activity. The polypeptide is Probable proteasome subunit beta type-4 (CPR1) (Cryptococcus neoformans var. neoformans serotype D (strain B-3501A) (Filobasidiella neoformans)).